We begin with the raw amino-acid sequence, 437 residues long: ATP-dependent protease ATPase subunit HslU (437 aa).

ATP-binding positions include valine 18, 60-65, aspartate 250, glutamate 315, and arginine 387; that span reads GCGKTE.

This sequence belongs to the ClpX chaperone family. HslU subfamily. As to quaternary structure, a double ring-shaped homohexamer of HslV is capped on each side by a ring-shaped HslU homohexamer. The assembly of the HslU/HslV complex is dependent on binding of ATP.

The protein resides in the cytoplasm. Functionally, ATPase subunit of a proteasome-like degradation complex; this subunit has chaperone activity. The binding of ATP and its subsequent hydrolysis by HslU are essential for unfolding of protein substrates subsequently hydrolyzed by HslV. HslU recognizes the N-terminal part of its protein substrates and unfolds these before they are guided to HslV for hydrolysis. The protein is ATP-dependent protease ATPase subunit HslU of Methylobacterium sp. (strain 4-46).